The following is a 299-amino-acid chain: Acidic endochitinase Pun g 14, amyloplastic (299 aa).

The N-terminal 26 residues, 1–26, are a transit peptide targeting the amyloplast; sequence MAKTLPFSRALLLSLSILLVARAISA. Residues 27 to 299 enclose the GH18 domain; it reads GDIAIYWGQN…TYSTTIKDQV (273 aa). Disulfide bonds link Cys46–Cys93 and Cys76–Cys83. Glu153 (proton donor) is an active-site residue. The cysteines at positions 185 and 216 are disulfide-linked.

It belongs to the glycosyl hydrolase 18 family. Chitinase class III subfamily. As to quaternary structure, monomer. In terms of tissue distribution, highly expressed in seeds and to a lesser extent in the skin of the pomegranate fruit (at protein level). Not expressed in leaves or flesh of the fruit (at protein level).

The protein resides in the plastid. Its subcellular location is the amyloplast. The catalysed reaction is Random endo-hydrolysis of N-acetyl-beta-D-glucosaminide (1-&gt;4)-beta-linkages in chitin and chitodextrins.. With respect to regulation, activity is not affected by addition of 10 mM Ca(2+) or removal of Ca(2+). In terms of biological role, hydrolyzes chitin. Probable calcium storage protein of the seeds. Binds calcium ions with high capacity and low affinity. Involved in seed germination. In Punica granatum (Pomegranate), this protein is Acidic endochitinase Pun g 14, amyloplastic.